A 251-amino-acid chain; its full sequence is Urease accessory protein UreF (251 aa).

Residues 1–20 (MAPAPDPAPAGSAAPDPASA) are disordered. Low complexity predominate over residues 9-20 (PAGSAAPDPASA).

The protein belongs to the UreF family. UreD, UreF and UreG form a complex that acts as a GTP-hydrolysis-dependent molecular chaperone, activating the urease apoprotein by helping to assemble the nickel containing metallocenter of UreC. The UreE protein probably delivers the nickel.

Its subcellular location is the cytoplasm. Required for maturation of urease via the functional incorporation of the urease nickel metallocenter. The chain is Urease accessory protein UreF from Paracidovorax citrulli (strain AAC00-1) (Acidovorax citrulli).